Here is a 589-residue protein sequence, read N- to C-terminus: ATP-dependent lipid A-core flippase (589 aa).

The next 5 membrane-spanning stretches (helical) occupy residues 23 to 43 (WPIF…DAGF), 60 to 80 (LVFI…RGAA), 153 to 173 (VGLL…FLVI), 249 to 269 (VGTS…LFFA), and 272 to 292 (PSFH…IMML). The region spanning 27–307 (LIGVVGMIAV…LTMVNSYIQK (281 aa)) is the ABC transmembrane type-1 domain. One can recognise an ABC transporter domain in the interval 339–575 (IEYQGVSFAY…NGAYAELYRM (237 aa)). 373-380 (GRSGAGKS) provides a ligand contact to ATP.

This sequence belongs to the ABC transporter superfamily. Lipid exporter (TC 3.A.1.106) family. As to quaternary structure, homodimer.

Its subcellular location is the cell inner membrane. The enzyme catalyses ATP + H2O + lipid A-core oligosaccharideSide 1 = ADP + phosphate + lipid A-core oligosaccharideSide 2.. In terms of biological role, involved in lipopolysaccharide (LPS) biosynthesis. Translocates lipid A-core from the inner to the outer leaflet of the inner membrane. Transmembrane domains (TMD) form a pore in the inner membrane and the ATP-binding domain (NBD) is responsible for energy generation. In Coxiella burnetii (strain RSA 493 / Nine Mile phase I), this protein is ATP-dependent lipid A-core flippase.